The sequence spans 494 residues: Tetracenomycin biosynthesis bifunctional cyclase/O-methyl transferase TcmN (494 aa).

Positions 11-140 (VNAPFELVWD…TTTRANMERI (130 aa)) are polyketide cyclase. S67 functions as the Proton acceptor; for cyclase activity in the catalytic mechanism. Catalysis depends on proton donor; for cyclase activity residues R69 and R82. Positions 169–494 (LLLAASGRLA…TWTTLECRPV (326 aa)) are methyltransferase. S-adenosyl-L-methionine contacts are provided by residues D358 and 384 to 386 (GDF). Catalysis depends on H405, which acts as the Proton acceptor; for methyltransferase activity.

In the C-terminal section; belongs to the class I-like SAM-binding methyltransferase superfamily. Cation-independent O-methyltransferase family. The tetracenomycin polyketide synthase (TCM PKS) is composed of a ketosynthase complex (TcmKL), an acyl carrier protein (TcmM), a cyclase (TcmN) and a probable second cyclase (TcmJ). TcmN is a homodimer in solution.

The enzyme catalyses 10 malonyl-CoA + 8 H(+) = tetracenomycin F2 + 10 CO2 + 10 CoA + 2 H2O. It functions in the pathway antibiotic biosynthesis; tetracenomycin C biosynthesis. Functionally, involved in the biosynthesis of tetracenomycin C (TCM C). Part of a type II polyketide synthase (PKS) that catalyzes the synthesis of tetracenomycin F2 (TCM F2), a precursor of TCM C, from malonyl-CoA. The TcmN N-terminal domain, when coupled with the other components of the PKS, catalyzes the cyclization and aromatization of the linear polyketide intermediate. Catalyzes the cyclization of the first and second rings. In addition, the C-terminal domain acts as a methyltransferase. It catalyzes the specific O-methylation of tetracenomycin D3 (TCM D3) to TCM B3, using S-adenosyl-L-methionine as the methyl donor. In Streptomyces glaucescens, this protein is Tetracenomycin biosynthesis bifunctional cyclase/O-methyl transferase TcmN.